The chain runs to 1050 residues: Probable beta-glucosidase E (1050 aa).

The interval 1–87 (MPPPDSNPGS…RSSSTNGGHN (87 aa)) is disordered. Topologically, residues 1–174 (MPPPDSNPGS…VKYARIWRRT (174 aa)) are cytoplasmic. Positions 11-20 (FRDHLKHDNK) are enriched in basic and acidic residues. Residues 47–56 (SPRSASASSS) are compositionally biased toward low complexity. Over residues 78 to 87 (RSSSTNGGHN) the composition is skewed to polar residues. A helical; Signal-anchor for type II membrane protein membrane pass occupies residues 175 to 195 (LVVVIVALALLVWGFLRFTAA). Over 196–1050 (QRQGPKVWPM…SRDLPLQAKY (855 aa)) the chain is Extracellular. N-linked (GlcNAc...) asparagine glycans are attached at residues Asn-236, Asn-244, Asn-300, and Asn-430. Asp-458 is an active-site residue. Residues Asn-501, Asn-540, Asn-605, Asn-884, Asn-920, Asn-929, and Asn-993 are each glycosylated (N-linked (GlcNAc...) asparagine).

Belongs to the glycosyl hydrolase 3 family.

It is found in the cell membrane. It carries out the reaction Hydrolysis of terminal, non-reducing beta-D-glucosyl residues with release of beta-D-glucose.. The protein operates within glycan metabolism; cellulose degradation. Beta-glucosidases are one of a number of cellulolytic enzymes involved in the degradation of cellulosic biomass. Catalyzes the last step releasing glucose from the inhibitory cellobiose. The sequence is that of Probable beta-glucosidase E (bglE) from Aspergillus clavatus (strain ATCC 1007 / CBS 513.65 / DSM 816 / NCTC 3887 / NRRL 1 / QM 1276 / 107).